We begin with the raw amino-acid sequence, 383 residues long: Putative 8-amino-7-oxononanoate synthase (383 aa).

Arginine 22 contributes to the substrate binding site. 109–110 (GY) is a binding site for pyridoxal 5'-phosphate. Substrate is bound at residue histidine 134. Pyridoxal 5'-phosphate contacts are provided by residues serine 182, 207–210 (DDAH), and 236–239 (TLSK). Lysine 239 is subject to N6-(pyridoxal phosphate)lysine. A substrate-binding site is contributed by threonine 348.

The protein belongs to the class-II pyridoxal-phosphate-dependent aminotransferase family. BioF subfamily. As to quaternary structure, homodimer. Requires pyridoxal 5'-phosphate as cofactor.

The enzyme catalyses 6-carboxyhexanoyl-[ACP] + L-alanine + H(+) = (8S)-8-amino-7-oxononanoate + holo-[ACP] + CO2. Its pathway is cofactor biosynthesis; biotin biosynthesis. In terms of biological role, catalyzes the decarboxylative condensation of pimeloyl-[acyl-carrier protein] and L-alanine to produce 8-amino-7-oxononanoate (AON), [acyl-carrier protein], and carbon dioxide. This is Putative 8-amino-7-oxononanoate synthase (bioF) from Caulobacter sp. (strain K31).